Here is a 1057-residue protein sequence, read N- to C-terminus: Probable E3 ubiquitin-protein ligase HERC4 (1057 aa).

7 RCC1 repeats span residues 1-51, 52-101, 102-154, 156-207, 208-259, 261-311, and 313-368; these read MLCW…FVLD, DGTV…ALND, KGQV…ALSK, SEVF…VLTL, SGAI…ALTK, GGVF…AFVP, and SGRI…KRIF. Residues 730-1057 form the HECT domain; sequence KNIDYKKPLK…IDHNEGFSLI (328 aa). The Glycyl thioester intermediate role is filled by C1025.

As to expression, expressed in brain and testis and detected in heart and placenta.

It is found in the cytoplasm. Its subcellular location is the cytosol. The enzyme catalyses S-ubiquitinyl-[E2 ubiquitin-conjugating enzyme]-L-cysteine + [acceptor protein]-L-lysine = [E2 ubiquitin-conjugating enzyme]-L-cysteine + N(6)-ubiquitinyl-[acceptor protein]-L-lysine.. The protein operates within protein modification; protein ubiquitination. Functionally, probable E3 ubiquitin-protein ligase involved in either protein trafficking or in the distribution of cellular structures. Required for spermatozoon maturation and fertility, and for the removal of the cytoplasmic droplet of the spermatozoon. E3 ubiquitin-protein ligases accept ubiquitin from an E2 ubiquitin-conjugating enzyme in the form of a thioester and then directly transfer it to targeted substrates. The polypeptide is Probable E3 ubiquitin-protein ligase HERC4 (HERC4) (Homo sapiens (Human)).